The following is a 129-amino-acid chain: Follitropin subunit beta (129 aa).

A signal peptide spans M1 to S20. Cystine bridges form between C21–C69, C35–C84, C38–C122, C46–C100, C50–C102, and C105–C112. N-linked (GlcNAc...) asparagine glycans are attached at residues N25 and N42.

It belongs to the glycoprotein hormones subunit beta family. Heterodimer. The active follitropin is a heterodimer composed of an alpha chain/CGA shared with other hormones and a unique beta chain/FSHB shown here.

It is found in the secreted. Its function is as follows. Together with the alpha chain CGA constitutes follitropin, the follicle-stimulating hormone, and provides its biological specificity to the hormone heterodimer. Binds FSHR, a G protein-coupled receptor, on target cells to activate downstream signaling pathways. Follitropin is involved in follicle development and spermatogenesis in reproductive organs. The protein is Follitropin subunit beta (FSHB) of Gorilla gorilla gorilla (Western lowland gorilla).